We begin with the raw amino-acid sequence, 76 residues long: Endothelin-1 (76 aa).

The interval cysteine 30–cysteine 44 is endothelin-like.

The protein belongs to the endothelin/sarafotoxin family.

The protein resides in the secreted. Functionally, endothelins are endothelium-derived vasoconstrictor peptides. Probable ligand for G-protein coupled receptors EDNRA and EDNRB which activates PTK2B, BCAR1, BCAR3 and, GTPases RAP1 and RHOA cascade in glomerular mesangial cells. Also binds the DEAR/FBXW7-AS1 receptor. Promotes mesenteric arterial wall remodeling via activation of ROCK signaling and subsequent colocalization of NFATC3 with F-actin filaments. NFATC3 then translocates to the nucleus where it subsequently promotes the transcription of the smooth muscle hypertrophy and differentiation marker ACTA2. This chain is Endothelin-1 (EDN1), found in Macaca fascicularis (Crab-eating macaque).